Here is a 108-residue protein sequence, read N- to C-terminus: Synaptic plasticity regulator PANTS (108 aa).

The tract at residues 58-108 (KNHSTQAKDSLQESERKRLADQRKFTPVWELRQKPPSDWHLPLNQGEPQDP) is disordered. A compositionally biased stretch (basic and acidic residues) spans 67-81 (SLQESERKRLADQRK).

The protein belongs to the UPF0545 family. Rapidly degraded by proteolysis following neuronal stimulation, resulting in increased AMPA receptor clustering.

The protein localises to the synapse. Its subcellular location is the synaptic cleft. Its function is as follows. Negatively regulates long-term potentiation and modulates adult synaptic plasticity. The sequence is that of Synaptic plasticity regulator PANTS from Danio rerio (Zebrafish).